The chain runs to 434 residues: Homoserine dehydrogenase (434 aa).

NADPH contacts are provided by Thr-13 and Val-14. NAD(+) contacts are provided by Val-14, Ala-33, and Ala-43. Residue Val-14 participates in NADP(+) binding. An NADPH-binding site is contributed by Arg-45. Residues Arg-45, Arg-46, and Lys-103 each coordinate NADP(+). Residue Lys-103 participates in NADPH binding. 4 residues coordinate Na(+): Glu-127, Val-130, Gly-132, and Ile-134. Residues Gly-185 and Glu-188 each coordinate NADP(+). L-homoserine contacts are provided by Glu-188 and Asp-199. Lys-203 serves as the catalytic Proton donor. Position 300 (Gly-300) interacts with NADPH. Position 300 (Gly-300) interacts with NAD(+). Gly-300 contributes to the NADP(+) binding site. The ACT domain occupies 353 to 429; sequence YLRIQAKDHP…GVSGPVVRIR (77 aa).

This sequence belongs to the homoserine dehydrogenase family. The cofactor is a metal cation.

The catalysed reaction is L-homoserine + NADP(+) = L-aspartate 4-semialdehyde + NADPH + H(+). It carries out the reaction L-homoserine + NAD(+) = L-aspartate 4-semialdehyde + NADH + H(+). Its pathway is amino-acid biosynthesis; L-methionine biosynthesis via de novo pathway; L-homoserine from L-aspartate: step 3/3. It functions in the pathway amino-acid biosynthesis; L-threonine biosynthesis; L-threonine from L-aspartate: step 3/5. With respect to regulation, feedback inhibition by threonine. In terms of biological role, catalyzes the conversion of L-aspartate-beta-semialdehyde (L-Asa) to L-homoserine (L-Hse), the third step in the biosynthesis of threonine and methionine from aspartate. This chain is Homoserine dehydrogenase (hom), found in Pseudomonas aeruginosa (strain ATCC 15692 / DSM 22644 / CIP 104116 / JCM 14847 / LMG 12228 / 1C / PRS 101 / PAO1).